The primary structure comprises 179 residues: MHPELDLVYVGKIVGTHGVKGELKVISLTDIENRFNELDRVYLVNEQDHYDPIIAHIESSFTHKNMEIVKFSEWDDINQVEGFHDWYIKIPREERPQLEEDEYYFDQITGLSVVTVEDEFLGTVTNIYQTGSNDVYEVSKEQDDKPILIPALYEVVKKIDLDEQIMIVDLPEGLLDEEE.

Residues 99–174 (EEDEYYFDQI…IMIVDLPEGL (76 aa)) form the PRC barrel domain.

Belongs to the RimM family. As to quaternary structure, binds ribosomal protein uS19.

The protein localises to the cytoplasm. Functionally, an accessory protein needed during the final step in the assembly of 30S ribosomal subunit, possibly for assembly of the head region. Essential for efficient processing of 16S rRNA. May be needed both before and after RbfA during the maturation of 16S rRNA. It has affinity for free ribosomal 30S subunits but not for 70S ribosomes. The chain is Ribosome maturation factor RimM from Natranaerobius thermophilus (strain ATCC BAA-1301 / DSM 18059 / JW/NM-WN-LF).